Consider the following 273-residue polypeptide: Transposable element Tc1 transposase (273 aa).

Belongs to the transposase 5 family.

The protein resides in the nucleus. In terms of biological role, probably essential for transposable element Tc1 transposition. The insertion of Tc1 is the main cause of spontaneous mutations. It is an endonuclease which can produce a single strand nick at the 5'-end of the transposon. This Caenorhabditis elegans protein is Transposable element Tc1 transposase (tc1a).